Here is a 199-residue protein sequence, read N- to C-terminus: ATP synthase subunit b (199 aa).

A helical membrane pass occupies residues 5–25; that stretch reads SFVTTLSVCVMILGLAALGFA.

The protein belongs to the ATPase B chain family. As to quaternary structure, F-type ATPases have 2 components, F(1) - the catalytic core - and F(0) - the membrane proton channel. F(1) has five subunits: alpha(3), beta(3), gamma(1), delta(1), epsilon(1). F(0) has three main subunits: a(1), b(2) and c(10-14). The alpha and beta chains form an alternating ring which encloses part of the gamma chain. F(1) is attached to F(0) by a central stalk formed by the gamma and epsilon chains, while a peripheral stalk is formed by the delta and b chains.

The protein localises to the cell inner membrane. Functionally, f(1)F(0) ATP synthase produces ATP from ADP in the presence of a proton or sodium gradient. F-type ATPases consist of two structural domains, F(1) containing the extramembraneous catalytic core and F(0) containing the membrane proton channel, linked together by a central stalk and a peripheral stalk. During catalysis, ATP synthesis in the catalytic domain of F(1) is coupled via a rotary mechanism of the central stalk subunits to proton translocation. Its function is as follows. Component of the F(0) channel, it forms part of the peripheral stalk, linking F(1) to F(0). This Citrifermentans bemidjiense (strain ATCC BAA-1014 / DSM 16622 / JCM 12645 / Bem) (Geobacter bemidjiensis) protein is ATP synthase subunit b.